Here is a 662-residue protein sequence, read N- to C-terminus: Phosphomethylpyrimidine synthase (662 aa).

Substrate-binding positions include asparagine 235, methionine 264, tyrosine 293, histidine 329, 349-351, 390-393, and glutamate 429; these read SRG and DGMR. Histidine 433 is a Zn(2+) binding site. Tyrosine 456 contributes to the substrate binding site. A Zn(2+)-binding site is contributed by histidine 497. Residues cysteine 577, cysteine 580, and cysteine 585 each contribute to the [4Fe-4S] cluster site.

It belongs to the ThiC family. As to quaternary structure, homodimer. Requires [4Fe-4S] cluster as cofactor.

It carries out the reaction 5-amino-1-(5-phospho-beta-D-ribosyl)imidazole + S-adenosyl-L-methionine = 4-amino-2-methyl-5-(phosphooxymethyl)pyrimidine + CO + 5'-deoxyadenosine + formate + L-methionine + 3 H(+). Its pathway is cofactor biosynthesis; thiamine diphosphate biosynthesis. Its function is as follows. Catalyzes the synthesis of the hydroxymethylpyrimidine phosphate (HMP-P) moiety of thiamine from aminoimidazole ribotide (AIR) in a radical S-adenosyl-L-methionine (SAM)-dependent reaction. The sequence is that of Phosphomethylpyrimidine synthase from Shewanella halifaxensis (strain HAW-EB4).